Reading from the N-terminus, the 129-residue chain is uncharacterized protein (129 aa).

Residues 6–129 enclose the VOC domain; the sequence is QVHHIAIIAT…DGLPLELYEQ (124 aa). Residues histidine 9, glutamate 57, histidine 78, and glutamate 125 each coordinate a divalent metal cation.

It to B.subtilis YwkD.

This is an uncharacterized protein from Escherichia coli (strain K12).